Consider the following 120-residue polypeptide: Aspartate 1-decarboxylase (120 aa).

S25 serves as the catalytic Schiff-base intermediate with substrate; via pyruvic acid. Position 25 is a pyruvic acid (Ser) (S25). Residue T57 participates in substrate binding. The active-site Proton donor is the Y58. 73–75 (GAA) provides a ligand contact to substrate.

The protein belongs to the PanD family. Heterooctamer of four alpha and four beta subunits. The cofactor is pyruvate. In terms of processing, is synthesized initially as an inactive proenzyme, which is activated by self-cleavage at a specific serine bond to produce a beta-subunit with a hydroxyl group at its C-terminus and an alpha-subunit with a pyruvoyl group at its N-terminus.

The protein resides in the cytoplasm. The enzyme catalyses L-aspartate + H(+) = beta-alanine + CO2. It functions in the pathway cofactor biosynthesis; (R)-pantothenate biosynthesis; beta-alanine from L-aspartate: step 1/1. Catalyzes the pyruvoyl-dependent decarboxylation of aspartate to produce beta-alanine. This chain is Aspartate 1-decarboxylase, found in Deinococcus geothermalis (strain DSM 11300 / CIP 105573 / AG-3a).